A 117-amino-acid polypeptide reads, in one-letter code: Protein Turandot F (117 aa).

The N-terminal stretch at 1–22 (MKTVILFSFLLVLLGYLGAGHA) is a signal peptide.

It belongs to the Turandot family.

It is found in the secreted. Functionally, a humoral factor that may play a role in stress tolerance. The sequence is that of Protein Turandot F from Drosophila sechellia (Fruit fly).